The primary structure comprises 88 residues: Small ribosomal subunit protein uS17 (88 aa).

The protein belongs to the universal ribosomal protein uS17 family. Part of the 30S ribosomal subunit.

One of the primary rRNA binding proteins, it binds specifically to the 5'-end of 16S ribosomal RNA. This Pseudomonas aeruginosa (strain LESB58) protein is Small ribosomal subunit protein uS17.